The sequence spans 340 residues: Flap endonuclease 1 (340 aa).

The tract at residues 1–98 is N-domain; it reads MGLNLKDLVV…AEIERRKQIK (98 aa). 7 residues coordinate Mg(2+): D27, D80, E152, E154, D173, D175, and D236. The segment at 116-258 is I-domain; the sequence is DARKYAQQTT…TALKMIKQHS (143 aa).

Belongs to the XPG/RAD2 endonuclease family. FEN1 subfamily. As to quaternary structure, interacts with PCNA. PCNA stimulates the nuclease activity without altering cleavage specificity. Requires Mg(2+) as cofactor.

Functionally, structure-specific nuclease with 5'-flap endonuclease and 5'-3' exonuclease activities involved in DNA replication and repair. During DNA replication, cleaves the 5'-overhanging flap structure that is generated by displacement synthesis when DNA polymerase encounters the 5'-end of a downstream Okazaki fragment. Binds the unpaired 3'-DNA end and kinks the DNA to facilitate 5' cleavage specificity. Cleaves one nucleotide into the double-stranded DNA from the junction in flap DNA, leaving a nick for ligation. Also involved in the base excision repair (BER) pathway. Acts as a genome stabilization factor that prevents flaps from equilibrating into structures that lead to duplications and deletions. Also possesses 5'-3' exonuclease activity on nicked or gapped double-stranded DNA. This chain is Flap endonuclease 1, found in Nitrosopumilus maritimus (strain SCM1).